The chain runs to 61 residues: MAKKSMIAKAQRPPKFKVRKYNRCKICGRPRAYLRDFGMCRICFRKLAHQGEIPGVKKASW.

4 residues coordinate Zn(2+): Cys24, Cys27, Cys40, and Cys43.

It belongs to the universal ribosomal protein uS14 family. Zinc-binding uS14 subfamily. Part of the 30S ribosomal subunit. Contacts proteins S3 and S10. Requires Zn(2+) as cofactor.

Functionally, binds 16S rRNA, required for the assembly of 30S particles and may also be responsible for determining the conformation of the 16S rRNA at the A site. In Carboxydothermus hydrogenoformans (strain ATCC BAA-161 / DSM 6008 / Z-2901), this protein is Small ribosomal subunit protein uS14.